A 457-amino-acid chain; its full sequence is Argininosuccinate lyase (457 aa).

This sequence belongs to the lyase 1 family. Argininosuccinate lyase subfamily.

It is found in the cytoplasm. It catalyses the reaction 2-(N(omega)-L-arginino)succinate = fumarate + L-arginine. The protein operates within amino-acid biosynthesis; L-arginine biosynthesis; L-arginine from L-ornithine and carbamoyl phosphate: step 3/3. The protein is Argininosuccinate lyase of Shigella boydii serotype 18 (strain CDC 3083-94 / BS512).